A 496-amino-acid polypeptide reads, in one-letter code: Probable cytosol aminopeptidase (496 aa).

K261 and D266 together coordinate Mn(2+). Residue K273 is part of the active site. Mn(2+) contacts are provided by D284, D343, and E345. R347 is a catalytic residue.

This sequence belongs to the peptidase M17 family. It depends on Mn(2+) as a cofactor.

Its subcellular location is the cytoplasm. It carries out the reaction Release of an N-terminal amino acid, Xaa-|-Yaa-, in which Xaa is preferably Leu, but may be other amino acids including Pro although not Arg or Lys, and Yaa may be Pro. Amino acid amides and methyl esters are also readily hydrolyzed, but rates on arylamides are exceedingly low.. The enzyme catalyses Release of an N-terminal amino acid, preferentially leucine, but not glutamic or aspartic acids.. Its function is as follows. Presumably involved in the processing and regular turnover of intracellular proteins. Catalyzes the removal of unsubstituted N-terminal amino acids from various peptides. The polypeptide is Probable cytosol aminopeptidase (Bacillus pumilus (strain SAFR-032)).